Consider the following 142-residue polypeptide: Hemoglobin subunit alpha (142 aa).

S1 carries the N-acetylserine modification. The Globin domain maps to 1-142 (SLSDKDKAAV…VALALAERYR (142 aa)). H59 contacts O2. Residue H88 coordinates heme b.

It belongs to the globin family. As to quaternary structure, heterotetramer of two alpha chains and two beta chains. Red blood cells.

Involved in oxygen transport from gills to the various peripheral tissues. This chain is Hemoglobin subunit alpha (hba), found in Gymnodraco acuticeps (Antarctic dragonfish).